The primary structure comprises 323 residues: Peroxidase 16 (323 aa).

The first 23 residues, 1–23 (MKNQSSFSIVALLLIFFSSSVFA), serve as a signal peptide directing secretion. Intrachain disulfides connect cysteine 34–cysteine 113, cysteine 67–cysteine 72, cysteine 119–cysteine 319, and cysteine 198–cysteine 230. Histidine 65 serves as the catalytic Proton acceptor. Ca(2+) contacts are provided by aspartate 66, valine 69, glycine 71, aspartate 73, and serine 75. Residue proline 161 participates in substrate binding. Histidine 191 serves as a coordination point for heme b. Threonine 192 contacts Ca(2+). Positions 243, 246, and 251 each coordinate Ca(2+).

Belongs to the peroxidase family. Classical plant (class III) peroxidase subfamily. Heme b serves as cofactor. The cofactor is Ca(2+). In terms of tissue distribution, expressed in the whole plant, but preferentially in roots and leaves.

The protein localises to the secreted. It carries out the reaction 2 a phenolic donor + H2O2 = 2 a phenolic radical donor + 2 H2O. Its function is as follows. Removal of H(2)O(2), oxidation of toxic reductants, biosynthesis and degradation of lignin, suberization, auxin catabolism, response to environmental stresses such as wounding, pathogen attack and oxidative stress. These functions might be dependent on each isozyme/isoform in each plant tissue. This chain is Peroxidase 16 (PER16), found in Arabidopsis thaliana (Mouse-ear cress).